We begin with the raw amino-acid sequence, 315 residues long: 3-chlorobenzoate-3,4-dioxygenase reductase subunit (315 aa).

Position 1-103 (1-103) interacts with FMN; it reads MVAIDQHDTY…GATTRISAPR (103 aa). In terms of domain architecture, FAD-binding FR-type spans 7–109; it reads HDTYSVRVIS…SAPRNAFALD (103 aa). Residues 228 to 315 form the 2Fe-2S ferredoxin-type domain; it reads NEFTVNLARS…ALSPELTLDL (88 aa). Residues Cys-264, Cys-269, Cys-272, and Cys-302 each coordinate [2Fe-2S] cluster.

The protein belongs to the PDR/VanB family. As to quaternary structure, this dioxygenase system consists of two proteins: phthalate oxygenase and phthalate oxygenase reductase. FMN serves as cofactor.

This chain is 3-chlorobenzoate-3,4-dioxygenase reductase subunit (cbaB), found in Comamonas testosteroni (Pseudomonas testosteroni).